We begin with the raw amino-acid sequence, 155 residues long: Histone H3-like centromeric protein hH3v (155 aa).

A compositionally biased stretch (low complexity) spans 1 to 24 (MPPKKGGVTKSKAVSKKAAAVPTP). A disordered region spans residues 1-56 (MPPKKGGVTKSKAVSKKAAAVPTPKATPPGRRKSRASSVQPGDPVPQGKKRRYRPG). The interval 45–148 (VPQGKKRRYR…IQLARRIRGV (104 aa)) is H3-like.

This sequence belongs to the histone H3 family. Component of centromeric nucleosomes, where DNA is wrapped around a histone octamer core. The octamer contains two molecules each of H2A, H2B, hH3v/CENPA and H4 assembled in one hH3v-H4 heterotetramer and two H2A-H2B heterodimers. Interacts with the inner kinetochore. Ubiquitinated. Is degraded through ubiquitin-mediated proteolysis when not protected by its association to the kinetochore.

Its subcellular location is the nucleus. It localises to the chromosome. It is found in the centromere. In terms of biological role, histone H3-like nucleosomal protein that is specifically found in centromeric nucleosomes. Replaces conventional H3 in the nucleosome core of centromeric chromatin that serves as an assembly site for the inner kinetochore. Required for recruitment and assembly of kinetochore proteins, mitotic progression and chromosome segregation. May serve as an epigenetic mark that propagates centromere identity through replication and cell division. The protein is Histone H3-like centromeric protein hH3v (hH3v) of Neurospora crassa (strain ATCC 24698 / 74-OR23-1A / CBS 708.71 / DSM 1257 / FGSC 987).